Here is a 245-residue protein sequence, read N- to C-terminus: MPRYKLTIEYDGAPFFGWQVQDTLPSVQGALEAAVKAMTGADLRVHGAGRTDAGVHARGQVAHVDIEKQFPPGRFRDGLNAHLRPHPIAVLEAEIVPDTFEARFSAVKRHYRYRIVNTRANLALDIGHAWRVPRRLDSDAMHAAARRLLGKHDFTTFRDTECQAKSPEKTLDQLDVLRDGREITIITSARSFLHSQVRSMVGSLVWVGEGRWTADDLSAALAARNRAACGIVAPPDGLYLVKVDY.

The Nucleophile role is filled by aspartate 52. Residue tyrosine 111 coordinates substrate.

This sequence belongs to the tRNA pseudouridine synthase TruA family. In terms of assembly, homodimer.

The catalysed reaction is uridine(38/39/40) in tRNA = pseudouridine(38/39/40) in tRNA. Functionally, formation of pseudouridine at positions 38, 39 and 40 in the anticodon stem and loop of transfer RNAs. In Bradyrhizobium diazoefficiens (strain JCM 10833 / BCRC 13528 / IAM 13628 / NBRC 14792 / USDA 110), this protein is tRNA pseudouridine synthase A.